We begin with the raw amino-acid sequence, 132 residues long: Chemokine-like protein TAFA-5 (132 aa).

Positions 1–43 (MAPSPRTGSRQDATALPSMSSTFWAFMILASLLIAYCSQLAAG) are cleaved as a signal peptide. Asparagine 113 is a glycosylation site (N-linked (GlcNAc...) asparagine).

It belongs to the TAFA family. Expressed in the subcutaneous and perirenal adipose tissue (at protein level). Highly expressed in adipose tissue with moderate expression in the brain and ovary. Isoform 2: Brain-specific.

The protein localises to the secreted. Its function is as follows. Acts as a chemokine-like protein by regulating cell proliferation and migration through activation of G protein-coupled receptors (GPCRs), such as S1PR2 and FPR2. Stimulates chemotactic migration of macrophages mediated by the MAPK3/ERK1 and AKT1 pathway. Blocks TNFSF11/RANKL-induced osteoclast formation from macrophages by inhibiting up-regulation of osteoclast fusogenic and differentiation genes. Stimulation of macrophage migration and inhibition of osteoclast formation is mediated via GPCR FPR2. Acts as an adipokine by negatively regulating vascular smooth muscle cell (VSMC) proliferation and migration in response to platelet-derived growth factor stimulation via GPCR S1PR2 and G protein GNA12/GNA13-transmitted RHOA signaling. Inhibits injury-induced cell proliferation and neointima formation in the femoral arteries. The polypeptide is Chemokine-like protein TAFA-5 (Homo sapiens (Human)).